The primary structure comprises 263 residues: Undecaprenyl-diphosphatase 2 (263 aa).

8 helical membrane passes run 15-37 (GLTE…LLGF), 42-62 (AKVF…VIFW), 83-103 (LHII…HSAI), 106-126 (VLFG…LMIV), 142-162 (ITYK…WPGF), 183-203 (AEYT…LDLI), 216-236 (LFAT…VSFL), and 242-262 (VKLT…YFFI).

The protein belongs to the UppP family.

It is found in the cell membrane. It catalyses the reaction di-trans,octa-cis-undecaprenyl diphosphate + H2O = di-trans,octa-cis-undecaprenyl phosphate + phosphate + H(+). Its function is as follows. Catalyzes the dephosphorylation of undecaprenyl diphosphate (UPP). Confers resistance to bacitracin. This Bacillus cereus (strain ATCC 10987 / NRS 248) protein is Undecaprenyl-diphosphatase 2.